The sequence spans 195 residues: Peptidyl-tRNA hydrolase (195 aa).

Y17 serves as a coordination point for tRNA. The active-site Proton acceptor is H22. TRNA-binding residues include F68, N70, and N116.

Belongs to the PTH family. As to quaternary structure, monomer.

It localises to the cytoplasm. The enzyme catalyses an N-acyl-L-alpha-aminoacyl-tRNA + H2O = an N-acyl-L-amino acid + a tRNA + H(+). Its function is as follows. Hydrolyzes ribosome-free peptidyl-tRNAs (with 1 or more amino acids incorporated), which drop off the ribosome during protein synthesis, or as a result of ribosome stalling. Functionally, catalyzes the release of premature peptidyl moieties from peptidyl-tRNA molecules trapped in stalled 50S ribosomal subunits, and thus maintains levels of free tRNAs and 50S ribosomes. The chain is Peptidyl-tRNA hydrolase from Erwinia tasmaniensis (strain DSM 17950 / CFBP 7177 / CIP 109463 / NCPPB 4357 / Et1/99).